A 524-amino-acid polypeptide reads, in one-letter code: Solute carrier family 35 member F5 (524 aa).

The segment at 1–22 is disordered; sequence MVPPRHHPGAGRPGALSSSPPF. Residues 13-22 are compositionally biased toward low complexity; it reads PGALSSSPPF. The next 2 membrane-spanning stretches (helical) occupy residues 69–89 and 101–121; these read MALG…SSEL and FFST…FIVW. A Phosphoserine modification is found at serine 207. Transmembrane regions (helical) follow at residues 244-264, 269-289, 297-317, 328-348, 362-382, 396-416, 421-441, and 453-473; these read ISFF…EALS, AIVN…AAMF, FTLS…LVNL, TIGS…IVMI, MFFG…FFLL, VVLM…EFLW, FLTS…LSII, and WLFF…TLLC. The region spanning 253-317 is the EamA domain; that stretch reads FLANFSYQEA…SIGGVVLVNL (65 aa).

It belongs to the SLC35F solute transporter family.

The protein resides in the membrane. Its function is as follows. Putative solute transporter. The chain is Solute carrier family 35 member F5 (SLC35F5) from Bos taurus (Bovine).